The sequence spans 434 residues: Methylenetetrahydrofolate--tRNA-(uracil-5-)-methyltransferase TrmFO (434 aa).

Residue 9–14 coordinates FAD; sequence GAGLAG.

This sequence belongs to the MnmG family. TrmFO subfamily. The cofactor is FAD.

It is found in the cytoplasm. The enzyme catalyses uridine(54) in tRNA + (6R)-5,10-methylene-5,6,7,8-tetrahydrofolate + NADH + H(+) = 5-methyluridine(54) in tRNA + (6S)-5,6,7,8-tetrahydrofolate + NAD(+). It catalyses the reaction uridine(54) in tRNA + (6R)-5,10-methylene-5,6,7,8-tetrahydrofolate + NADPH + H(+) = 5-methyluridine(54) in tRNA + (6S)-5,6,7,8-tetrahydrofolate + NADP(+). Its function is as follows. Catalyzes the folate-dependent formation of 5-methyl-uridine at position 54 (M-5-U54) in all tRNAs. This chain is Methylenetetrahydrofolate--tRNA-(uracil-5-)-methyltransferase TrmFO, found in Bacillus pumilus (strain SAFR-032).